The primary structure comprises 489 residues: Cytochrome P450 2C41 (489 aa).

C434 is a binding site for heme.

The protein belongs to the cytochrome P450 family. The cofactor is heme.

The protein localises to the endoplasmic reticulum membrane. It is found in the microsome membrane. It catalyses the reaction an organic molecule + reduced [NADPH--hemoprotein reductase] + O2 = an alcohol + oxidized [NADPH--hemoprotein reductase] + H2O + H(+). In terms of biological role, cytochromes P450 are a group of heme-thiolate monooxygenases. In liver microsomes, this enzyme is involved in an NADPH-dependent electron transport pathway. It oxidizes a variety of structurally unrelated compounds, including steroids, fatty acids, and xenobiotics. In Canis lupus familiaris (Dog), this protein is Cytochrome P450 2C41 (CYP2C41).